The following is an 893-amino-acid chain: Protein translocase subunit SecA (893 aa).

ATP contacts are provided by residues Gln87, 105–109 (GEGKT), and Asp512. Residues 840 to 849 (VEEQHRKSEE) show a composition bias toward basic and acidic residues. The segment at 840–893 (VEEQHRKSEEVPMDFQHQSASSPSEQAQTPRVGRNEPCPCGSGKKYKQCHGKLA) is disordered. Residues 855 to 868 (QHQSASSPSEQAQT) show a composition bias toward polar residues. Residues Cys877, Cys879, Cys888, and His889 each coordinate Zn(2+). Positions 883-893 (KKYKQCHGKLA) are enriched in basic residues.

The protein belongs to the SecA family. As to quaternary structure, monomer and homodimer. Part of the essential Sec protein translocation apparatus which comprises SecA, SecYEG and auxiliary proteins SecDF-YajC and YidC. It depends on Zn(2+) as a cofactor.

The protein resides in the cell inner membrane. It is found in the cytoplasm. It catalyses the reaction ATP + H2O + cellular proteinSide 1 = ADP + phosphate + cellular proteinSide 2.. In terms of biological role, part of the Sec protein translocase complex. Interacts with the SecYEG preprotein conducting channel. Has a central role in coupling the hydrolysis of ATP to the transfer of proteins into and across the cell membrane, serving both as a receptor for the preprotein-SecB complex and as an ATP-driven molecular motor driving the stepwise translocation of polypeptide chains across the membrane. The protein is Protein translocase subunit SecA of Colwellia psychrerythraea (strain 34H / ATCC BAA-681) (Vibrio psychroerythus).